Consider the following 552-residue polypeptide: Membrane protein insertase YidC (552 aa).

The helical transmembrane segment at 3–23 (TKRLILFVIFSFSILMLWDSW) threads the bilayer. Positions 29–65 (PPAASQTQTTAQSVEDGSVPQAAKSSASAANQASVPA) are disordered. The next 4 membrane-spanning stretches (helical) occupy residues 359–379 (WGVAIILLTILIKLVFYPLSA), 429–449 (LPILVQIPVFIALYWVLLGSV), 463–483 (LSAVDPYYVLPILMGITMIIQ), and 503–523 (PIVFSVFFFFFPAGLVLYWLV).

This sequence belongs to the OXA1/ALB3/YidC family. Type 1 subfamily. In terms of assembly, interacts with the Sec translocase complex via SecD. Specifically interacts with transmembrane segments of nascent integral membrane proteins during membrane integration.

The protein localises to the cell inner membrane. Required for the insertion and/or proper folding and/or complex formation of integral membrane proteins into the membrane. Involved in integration of membrane proteins that insert both dependently and independently of the Sec translocase complex, as well as at least some lipoproteins. Aids folding of multispanning membrane proteins. The chain is Membrane protein insertase YidC from Methylobacillus flagellatus (strain ATCC 51484 / DSM 6875 / VKM B-1610 / KT).